We begin with the raw amino-acid sequence, 581 residues long: Arginine--tRNA ligase (581 aa).

Residues 126-136 carry the 'HIGH' region motif; it reads PNLAKEMHVGH.

It belongs to the class-I aminoacyl-tRNA synthetase family. As to quaternary structure, monomer.

The protein resides in the cytoplasm. It carries out the reaction tRNA(Arg) + L-arginine + ATP = L-arginyl-tRNA(Arg) + AMP + diphosphate. The protein is Arginine--tRNA ligase of Shewanella oneidensis (strain ATCC 700550 / JCM 31522 / CIP 106686 / LMG 19005 / NCIMB 14063 / MR-1).